Consider the following 66-residue polypeptide: Beta-defensin 107A (66 aa).

An N-terminal signal peptide occupies residues 1–22; the sequence is MKIFFFIFAALILLAQIFQART. 2 disulfides stabilise this stretch: cysteine 37/cysteine 51 and cysteine 41/cysteine 60.

The protein belongs to the beta-defensin family.

It localises to the secreted. Functionally, has antibacterial activity. The chain is Beta-defensin 107A (DEFB107A) from Hylobates lar (Lar gibbon).